A 469-amino-acid chain; its full sequence is 3-isopropylmalate dehydratase large subunit (469 aa).

Residues cysteine 350, cysteine 410, and cysteine 413 each contribute to the [4Fe-4S] cluster site.

It belongs to the aconitase/IPM isomerase family. LeuC type 1 subfamily. Heterodimer of LeuC and LeuD. It depends on [4Fe-4S] cluster as a cofactor.

It carries out the reaction (2R,3S)-3-isopropylmalate = (2S)-2-isopropylmalate. It functions in the pathway amino-acid biosynthesis; L-leucine biosynthesis; L-leucine from 3-methyl-2-oxobutanoate: step 2/4. In terms of biological role, catalyzes the isomerization between 2-isopropylmalate and 3-isopropylmalate, via the formation of 2-isopropylmaleate. This Rhizobium meliloti (strain 1021) (Ensifer meliloti) protein is 3-isopropylmalate dehydratase large subunit.